The chain runs to 370 residues: Actin-related protein 2/3 complex subunit 1A-A (370 aa).

WD repeat units follow at residues 6-45 (FLLEPISCHAWNKDLTQIAISPNNHEVHIYKKSGDQWVKG), 50-89 (EHNGHITGIDWAPKSDRIVTCGADRNAYVWSQKDGVWKPT), 140-179 (PIRSTVLSLDWHPNNVLLAAGSCDFKTRVFSAYIKEVDEK), 202-241 (SSGGWVHSVSFSASGNKLAWVSHDSTVSVADASKNMSVSQ), 244-284 (TEFL…TFVS), and 322-365 (LHQN…SYIQ).

Belongs to the WD repeat ARPC1 family. Component of the Arp2/3 complex.

Its subcellular location is the cytoplasm. The protein resides in the cytoskeleton. The protein localises to the nucleus. Probably functions as a component of the Arp2/3 complex which is involved in regulation of actin polymerization and together with an activating nucleation-promoting factor (NPF) mediates the formation of branched actin networks. In addition to its role in the cytoplasmic cytoskeleton, the Arp2/3 complex also promotes actin polymerization in the nucleus, thereby regulating gene transcription and repair of damaged DNA. This chain is Actin-related protein 2/3 complex subunit 1A-A (arpc1a-a), found in Xenopus laevis (African clawed frog).